The primary structure comprises 303 residues: Imidazoleglycerol-phosphate dehydratase (303 aa).

The protein belongs to the imidazoleglycerol-phosphate dehydratase family.

It localises to the cytoplasm. The catalysed reaction is D-erythro-1-(imidazol-4-yl)glycerol 3-phosphate = 3-(imidazol-4-yl)-2-oxopropyl phosphate + H2O. It functions in the pathway amino-acid biosynthesis; L-histidine biosynthesis; L-histidine from 5-phospho-alpha-D-ribose 1-diphosphate: step 6/9. The chain is Imidazoleglycerol-phosphate dehydratase from Neisseria gonorrhoeae (strain ATCC 700825 / FA 1090).